Consider the following 277-residue polypeptide: Zaragozic acid A biosynthesis cluster protein 1 (277 aa).

Its pathway is secondary metabolite biosynthesis. Its function is as follows. Part of the gene cluster that mediates the biosynthesis of squalestatin S1 (SQS1, also known as zaragozic acid A), a heavily oxidized fungal polyketide that offers potent cholesterol lowering activity by targeting squalene synthase (SS). SQS1 is composed of a 2,8-dioxobicyclic[3.2.1]octane-3,4,5-tricarboxyclic acid core that is connected to two lipophilic polyketide arms. These initial steps feature the priming of an unusual benzoic acid starter unit onto the highly reducing polyketide synthase clz14, followed by oxaloacetate extension and product release to generate a tricarboxylic acid containing product. The phenylalanine ammonia lyase (PAL) clz10 and the acyl-CoA ligase clz12 are involved in transforming phenylalanine into benzoyl-CoA. The citrate synthase-like protein clz17 is involved in connecting the C-alpha-carbons of the hexaketide chain and oxaloacetate to afford the tricarboxylic acid unit. The potential hydrolytic enzymes, clz11 and clz13, are in close proximity to pks2 and may participate in product release. On the other side, the tetraketide arm is synthesized by a the squalestatin tetraketide synthase clz2 and enzymatically esterified to the core in the last biosynthetic step, by the acetyltransferase clz6. The biosynthesis of the tetraketide must involve 3 rounds of chain extension. After the first and second rounds methyl-transfer occurs, and in all rounds of extension the ketoreductase and dehydratase are active. The enoyl reductase and C-MeT of clz2 are not active in the final round of extension. The acetyltransferase clz6 appears to have a broad substrate selectivity for its acyl CoA substrate, allowing the in vitro synthesis of novel squalestatins. The biosynthesis of SQS1 requires several oxidative steps likely performed by oxidoreductases clz3, clz15 and clz16. Finally, in support of the identification of the cluster as being responsible for SQS1 production, the cluster contains a gene encoding a putative squalene synthase (SS) clz20, suggesting a likely mechanism for self-resistance. This Cochliobolus lunatus (Filamentous fungus) protein is Zaragozic acid A biosynthesis cluster protein 1.